A 575-amino-acid chain; its full sequence is Interleukin-1 receptor-like 2 (575 aa).

The first 19 residues, 1-19 (MWSLLLCGLSIALPLSVTA), serve as a signal peptide directing secretion. Ig-like C2-type domains lie at 20 to 111 (DGCK…VNLT), 126 to 211 (PNLS…VLNG), and 222 to 318 (YGGS…MCHA). At 20 to 335 (DGCKDIFMKN…ILQLPAPDFR (316 aa)) the chain is on the extracellular side. 9 N-linked (GlcNAc...) asparagine glycosylation sites follow: N41, N59, N109, N127, N184, N234, N250, N266, and N299. An intrachain disulfide couples C42 to C95. Cysteines 146 and 195 form a disulfide. C249 and C316 are disulfide-bonded. A helical transmembrane segment spans residues 336–356 (AYLIGGLIALVAVAVSVVYIY). Residues 357 to 575 (NIFKIDIVLW…RRKKCTLTTG (219 aa)) are Cytoplasmic-facing. The 156-residue stretch at 381–536 (KLYDAYVLYP…KFWKTVRYHM (156 aa)) folds into the TIR domain. Residue E467 is part of the active site.

The protein belongs to the interleukin-1 receptor family. In terms of assembly, interacts with IL1RAP; the association is enhanced by IL36B indicative for an functional signaling complex and inhibited by IL36RN. In terms of tissue distribution, expressed in synovial fibroblasts and articular chondrocytes. Expressed in keratinocytes and monocyte-derived dendritic cells. Expressed in monocytes and myeloid dendritic cells; at protein level.

Its subcellular location is the membrane. The catalysed reaction is NAD(+) + H2O = ADP-D-ribose + nicotinamide + H(+). Functionally, receptor for interleukin-36 (IL36A, IL36B and IL36G). After binding to interleukin-36 associates with the coreceptor IL1RAP to form the interleukin-36 receptor complex which mediates interleukin-36-dependent activation of NF-kappa-B, MAPK and other pathways. The IL-36 signaling system is thought to be present in epithelial barriers and to take part in local inflammatory response; it is similar to the IL-1 system. Seems to be involved in skin inflammatory response by induction of the IL-23/IL-17/IL-22 pathway. This is Interleukin-1 receptor-like 2 (IL1RL2) from Homo sapiens (Human).